The following is a 403-amino-acid chain: Glyceraldehyde-3-phosphate dehydrogenase A, chloroplastic (403 aa).

The transit peptide at 1 to 66 directs the protein to the chloroplast; that stretch reads MASSMLSATT…GGPRRAPTEA (66 aa). NADP(+)-binding positions include 77–78, D102, and R147; that span reads RI. D-glyceraldehyde 3-phosphate-binding positions include 219-221, T250, R265, 278-279, and R301; these read SCT and TG. The active-site Nucleophile is the C220. N383 contributes to the NADP(+) binding site.

It belongs to the glyceraldehyde-3-phosphate dehydrogenase family. As to quaternary structure, tetramer of either four A chains (GAPDH 2) or two A and two B chains (GAPDH 1).

It localises to the plastid. It is found in the chloroplast. The catalysed reaction is D-glyceraldehyde 3-phosphate + phosphate + NADP(+) = (2R)-3-phospho-glyceroyl phosphate + NADPH + H(+). Its pathway is carbohydrate biosynthesis; Calvin cycle. The sequence is that of Glyceraldehyde-3-phosphate dehydrogenase A, chloroplastic (GAPA) from Zea mays (Maize).